A 375-amino-acid polypeptide reads, in one-letter code: RING-H2 finger protein ATL16 (375 aa).

The tract at residues 1–20 (MDLSNRRNPLRDLSFPPPPP) is disordered. Residues 39 to 59 (VAVIGILATAFLLVSYYVFVI) traverse the membrane as a helical segment. The segment at 138-180 (CSVCLSEFQDEEKLRIIPNCSHLFHIDCIDVWLQNNANCPLCR) adopts an RING-type; atypical zinc-finger fold. Disordered regions lie at residues 223–266 (GSDR…DRGG) and 356–375 (SFGS…YFEP). The span at 238–257 (QERSNSGYLLNENTQNSISP) shows a compositional bias: polar residues.

It belongs to the RING-type zinc finger family. ATL subfamily.

The protein resides in the membrane. The enzyme catalyses S-ubiquitinyl-[E2 ubiquitin-conjugating enzyme]-L-cysteine + [acceptor protein]-L-lysine = [E2 ubiquitin-conjugating enzyme]-L-cysteine + N(6)-ubiquitinyl-[acceptor protein]-L-lysine.. It functions in the pathway protein modification; protein ubiquitination. The chain is RING-H2 finger protein ATL16 (ATL16) from Arabidopsis thaliana (Mouse-ear cress).